A 202-amino-acid polypeptide reads, in one-letter code: Transmembrane 4 L6 family member 1 (202 aa).

The Cytoplasmic portion of the chain corresponds to 1-9 (MCYGKCARC). Residues 10–30 (IGHSLVGLALLCIAANILLYF) form a helical membrane-spanning segment. The Extracellular portion of the chain corresponds to 31 to 49 (PNGETKYASENHLSRFVWF). Residues 50–70 (FSGIVGGGLLMLLPAFVFIGL) traverse the membrane as a helical segment. The Cytoplasmic portion of the chain corresponds to 71-93 (EQDDCCGCCGHENCGKRCAMLSS). Residues 94–114 (VLAALIGIAGSGYCVIVAALG) form a helical membrane-spanning segment. At 115 to 161 (LAEGPLCLDSLGQWNYTFASTEGQYLLDTSTWSECTEPKHIVEWNVS) the chain is on the extracellular side. N-linked (GlcNAc...) asparagine glycosylation is found at Asn-129 and Asn-159. The helical transmembrane segment at 162-182 (LFSILLALGGIEFILCLIQVI) threads the bilayer. Residues 183 to 202 (NGVLGGICGFCCSHQQQYDC) are Cytoplasmic-facing.

Belongs to the L6 tetraspanin family. In terms of assembly, present in high molecular weight complexes in tumor cells. Interacts with SDCBP2. Highly expressed in lung, breast, colon and ovarian carcinomas. It is also present on some normal cells, endothelial cells in particular.

It localises to the membrane. This chain is Transmembrane 4 L6 family member 1 (TM4SF1), found in Homo sapiens (Human).